The primary structure comprises 264 residues: Hemin import ATP-binding protein HmuV (264 aa).

Residues 2 to 241 (IEVSGVSVRL…ETMLSVFGLR (240 aa)) form the ABC transporter domain. Position 34–41 (34–41 (GPNGSGKT)) interacts with ATP.

This sequence belongs to the ABC transporter superfamily. Heme (hemin) importer (TC 3.A.1.14.5) family. As to quaternary structure, the complex is composed of two ATP-binding proteins (HmuV), two transmembrane proteins (HmuU) and a solute-binding protein (HmuT).

The protein localises to the cell inner membrane. Part of the ABC transporter complex HmuTUV involved in hemin import. Responsible for energy coupling to the transport system. In Rhizobium leguminosarum, this protein is Hemin import ATP-binding protein HmuV.